A 426-amino-acid polypeptide reads, in one-letter code: MDRSHPSLEPQAKGPCVIAPVRAVLRLRRRVCVLRKRRLLQPGTEPDSGTGTLGPTGSLGTLRADLDQPKFFTFDSLTELTSRTPRKRRRRSRVVLYPETSRKCRPRTERQSRAQRCLLLLVAIVGFQVLNAIENLDDNAQRYDLDGLEKALQRSVFGQPAAVGRIMALLRDYLATHVHSHPLLLALHGPSGVGKSHVGRLLARHFRAVLEDGALVLQYHARYHCPEPRPVQDCRKELAQRVADVVAQAEAEEKTPLLVLDEAELLPPALLDELHDLLQPQRSHHFHNAIYVLLSGAGGIEITHFVLQNASRMLPPLRHSAGSTQTEESPAQELLTSLRELLAREHPLWHTAAIVPFLLLDKPDVVNCFREEMAGEGFFPEQALAEHLAEQLSYYHVAGHEFAITGCKQVVAKVNLLQHKPAHAGH.

The disordered stretch occupies residues 41–60 (QPGTEPDSGTGTLGPTGSLG). A compositionally biased stretch (low complexity) spans 48-60 (SGTGTLGPTGSLG). Phosphoserine occurs at positions 58 and 76. Residue Thr-84 is modified to Phosphothreonine. Position 101 is a phosphoserine (Ser-101). The chain crosses the membrane as a helical span at residues 117 to 133 (CLLLLVAIVGFQVLNAI). Residue 189–196 (GPSGVGKS) coordinates ATP.

This sequence belongs to the ClpA/ClpB family. Torsin subfamily.

It localises to the membrane. In Mus musculus (Mouse), this protein is Torsin-4A (Tor4a).